We begin with the raw amino-acid sequence, 389 residues long: 1-deoxy-D-xylulose 5-phosphate reductoisomerase (389 aa).

6 residues coordinate NADPH: Ser11, Gly12, Ser13, Val14, Asn39, and Asn122. Lys123 contacts 1-deoxy-D-xylulose 5-phosphate. Glu124 is a binding site for NADPH. Mn(2+) is bound at residue Asp148. Ser149, Glu150, Ser174, and His197 together coordinate 1-deoxy-D-xylulose 5-phosphate. Glu150 contacts Mn(2+). Gly203 contributes to the NADPH binding site. 1-deoxy-D-xylulose 5-phosphate is bound by residues Ser210, Asn215, Lys216, and Glu219. Residue Glu219 coordinates Mn(2+).

It belongs to the DXR family. It depends on Mg(2+) as a cofactor. Requires Mn(2+) as cofactor.

The catalysed reaction is 2-C-methyl-D-erythritol 4-phosphate + NADP(+) = 1-deoxy-D-xylulose 5-phosphate + NADPH + H(+). Its pathway is isoprenoid biosynthesis; isopentenyl diphosphate biosynthesis via DXP pathway; isopentenyl diphosphate from 1-deoxy-D-xylulose 5-phosphate: step 1/6. In terms of biological role, catalyzes the NADPH-dependent rearrangement and reduction of 1-deoxy-D-xylulose-5-phosphate (DXP) to 2-C-methyl-D-erythritol 4-phosphate (MEP). The protein is 1-deoxy-D-xylulose 5-phosphate reductoisomerase of Leptospira interrogans serogroup Icterohaemorrhagiae serovar Lai (strain 56601).